The primary structure comprises 224 residues: Octanoyl-[acyl-carrier-protein]:protein N-octanoyltransferase LIPT2, mitochondrial (224 aa).

The BPL/LPL catalytic domain occupies 37-217 (SNIPNTLLLC…AFTEQFNCTL (181 aa)). Substrate is bound by residues 81-88 (RGGLITFH), 147-149 (AIG), and 160-162 (GLA). Cysteine 178 functions as the Acyl-thioester intermediate in the catalytic mechanism.

Belongs to the LipB family.

It is found in the mitochondrion. The catalysed reaction is octanoyl-[ACP] + L-lysyl-[protein] = N(6)-octanoyl-L-lysyl-[protein] + holo-[ACP] + H(+). It functions in the pathway protein modification; protein lipoylation via endogenous pathway; protein N(6)-(lipoyl)lysine from octanoyl-[acyl-carrier-protein]: step 1/2. Functionally, catalyzes the transfer of endogenously produced octanoic acid from octanoyl-acyl-carrier-protein (octanoyl-ACP) onto the lipoyl domains of lipoate-dependent enzymes such as the protein H of the glycine cleavage system (GCSH). Lipoyl-ACP can also act as a substrate although octanoyl-ACP is likely to be the physiological substrate. The polypeptide is Octanoyl-[acyl-carrier-protein]:protein N-octanoyltransferase LIPT2, mitochondrial (lipt2) (Danio rerio (Zebrafish)).